The primary structure comprises 83 residues: Translational regulator CsrA (83 aa).

Belongs to the CsrA/RsmA family. In terms of assembly, homodimer; the beta-strands of each monomer intercalate to form a hydrophobic core, while the alpha-helices form wings that extend away from the core.

The protein resides in the cytoplasm. Its function is as follows. A translational regulator that binds mRNA to regulate translation initiation and/or mRNA stability. Usually binds in the 5'-UTR at or near the Shine-Dalgarno sequence preventing ribosome-binding, thus repressing translation. Its main target seems to be the major flagellin gene, while its function is anatagonized by FliW. This Thermotoga petrophila (strain ATCC BAA-488 / DSM 13995 / JCM 10881 / RKU-1) protein is Translational regulator CsrA.